The primary structure comprises 693 residues: DNA-directed RNA polymerase subunit beta' (693 aa).

Residues Cys76, Cys78, Cys94, and Cys97 each coordinate Zn(2+). Mg(2+) contacts are provided by Asp496, Asp498, and Asp500.

It belongs to the RNA polymerase beta' chain family. RpoC1 subfamily. In terms of assembly, in plastids the minimal PEP RNA polymerase catalytic core is composed of four subunits: alpha, beta, beta', and beta''. When a (nuclear-encoded) sigma factor is associated with the core the holoenzyme is formed, which can initiate transcription. Mg(2+) serves as cofactor. The cofactor is Zn(2+).

Its subcellular location is the plastid. The protein resides in the chloroplast. It catalyses the reaction RNA(n) + a ribonucleoside 5'-triphosphate = RNA(n+1) + diphosphate. Functionally, DNA-dependent RNA polymerase catalyzes the transcription of DNA into RNA using the four ribonucleoside triphosphates as substrates. The chain is DNA-directed RNA polymerase subunit beta' from Nuphar advena (Common spatterdock).